A 120-amino-acid chain; its full sequence is Large ribosomal subunit protein uL18 (120 aa).

This sequence belongs to the universal ribosomal protein uL18 family. Part of the 50S ribosomal subunit; part of the 5S rRNA/L5/L18/L25 subcomplex. Contacts the 5S and 23S rRNAs.

In terms of biological role, this is one of the proteins that bind and probably mediate the attachment of the 5S RNA into the large ribosomal subunit, where it forms part of the central protuberance. This chain is Large ribosomal subunit protein uL18, found in Chloroflexus aggregans (strain MD-66 / DSM 9485).